The primary structure comprises 208 residues: ATP-dependent Clp protease proteolytic subunit (208 aa).

The active-site Nucleophile is the serine 98. Histidine 123 is an active-site residue.

This sequence belongs to the peptidase S14 family. In terms of assembly, fourteen ClpP subunits assemble into 2 heptameric rings which stack back to back to give a disk-like structure with a central cavity, resembling the structure of eukaryotic proteasomes.

The protein resides in the cytoplasm. The enzyme catalyses Hydrolysis of proteins to small peptides in the presence of ATP and magnesium. alpha-casein is the usual test substrate. In the absence of ATP, only oligopeptides shorter than five residues are hydrolyzed (such as succinyl-Leu-Tyr-|-NHMec, and Leu-Tyr-Leu-|-Tyr-Trp, in which cleavage of the -Tyr-|-Leu- and -Tyr-|-Trp bonds also occurs).. Functionally, cleaves peptides in various proteins in a process that requires ATP hydrolysis. Has a chymotrypsin-like activity. Plays a major role in the degradation of misfolded proteins. The protein is ATP-dependent Clp protease proteolytic subunit of Wolbachia pipientis subsp. Culex pipiens (strain wPip).